The primary structure comprises 270 residues: Ribosomal RNA small subunit methyltransferase A (270 aa).

6 residues coordinate S-adenosyl-L-methionine: Asn-18, Leu-20, Gly-45, Glu-66, Asp-91, and Asn-112.

It belongs to the class I-like SAM-binding methyltransferase superfamily. rRNA adenine N(6)-methyltransferase family. RsmA subfamily.

The protein localises to the cytoplasm. It carries out the reaction adenosine(1518)/adenosine(1519) in 16S rRNA + 4 S-adenosyl-L-methionine = N(6)-dimethyladenosine(1518)/N(6)-dimethyladenosine(1519) in 16S rRNA + 4 S-adenosyl-L-homocysteine + 4 H(+). Functionally, specifically dimethylates two adjacent adenosines (A1518 and A1519) in the loop of a conserved hairpin near the 3'-end of 16S rRNA in the 30S particle. May play a critical role in biogenesis of 30S subunits. The polypeptide is Ribosomal RNA small subunit methyltransferase A (Shewanella piezotolerans (strain WP3 / JCM 13877)).